We begin with the raw amino-acid sequence, 411 residues long: uncharacterized protein (411 aa).

Belongs to the peptidase M20 family.

This is an uncharacterized protein from Haemophilus influenzae (strain ATCC 51907 / DSM 11121 / KW20 / Rd).